The chain runs to 179 residues: Large ribosomal subunit protein uL5 (179 aa).

Belongs to the universal ribosomal protein uL5 family. In terms of assembly, part of the 50S ribosomal subunit; part of the 5S rRNA/L5/L18/L25 subcomplex. Contacts the 5S rRNA and the P site tRNA. Forms a bridge to the 30S subunit in the 70S ribosome.

Its function is as follows. This is one of the proteins that bind and probably mediate the attachment of the 5S RNA into the large ribosomal subunit, where it forms part of the central protuberance. In the 70S ribosome it contacts protein S13 of the 30S subunit (bridge B1b), connecting the 2 subunits; this bridge is implicated in subunit movement. Contacts the P site tRNA; the 5S rRNA and some of its associated proteins might help stabilize positioning of ribosome-bound tRNAs. This chain is Large ribosomal subunit protein uL5, found in Bdellovibrio bacteriovorus (strain ATCC 15356 / DSM 50701 / NCIMB 9529 / HD100).